Here is a 72-residue protein sequence, read N- to C-terminus: Large ribosomal subunit protein bL31 (72 aa).

The Zn(2+) site is built by Cys16, Cys18, Cys37, and Cys40.

This sequence belongs to the bacterial ribosomal protein bL31 family. Type A subfamily. Part of the 50S ribosomal subunit. The cofactor is Zn(2+).

Binds the 23S rRNA. The polypeptide is Large ribosomal subunit protein bL31 (Buchnera aphidicola subsp. Acyrthosiphon pisum (strain Tuc7)).